The primary structure comprises 454 residues: Adenylosuccinate synthetase isozyme 1 B (454 aa).

Residues Met-1–Tyr-24 form a disordered region. GTP-binding positions include Gly-39–Lys-45 and Gly-67–Thr-69. The active-site Proton acceptor is Asp-40. Mg(2+) is bound by residues Asp-40 and Gly-67. Residue Asp-40 participates in substrate binding. IMP contacts are provided by residues Asp-40–Lys-43, Asn-65–His-68, Thr-160, Arg-174, Asn-253, Thr-268, and Arg-332. His-68 serves as the catalytic Proton donor. Val-328–Arg-334 contacts substrate. GTP contacts are provided by residues Arg-334, Lys-360–Asp-362, and Gly-442–Lys-445.

This sequence belongs to the adenylosuccinate synthetase family. In terms of assembly, homodimer. The cofactor is Mg(2+).

It localises to the cytoplasm. The catalysed reaction is IMP + L-aspartate + GTP = N(6)-(1,2-dicarboxyethyl)-AMP + GDP + phosphate + 2 H(+). It participates in purine metabolism; AMP biosynthesis via de novo pathway; AMP from IMP: step 1/2. Functionally, component of the purine nucleotide cycle (PNC), which interconverts IMP and AMP to regulate the nucleotide levels in various tissues, and which contributes to glycolysis and ammoniagenesis. Catalyzes the first committed step in the biosynthesis of AMP from IMP. The sequence is that of Adenylosuccinate synthetase isozyme 1 B (adss1-b) from Xenopus laevis (African clawed frog).